Here is a 1372-residue protein sequence, read N- to C-terminus: DNA-directed RNA polymerase subunit beta (1372 aa).

The protein belongs to the RNA polymerase beta chain family. The RNAP catalytic core consists of 2 alpha, 1 beta, 1 beta' and 1 omega subunit. When a sigma factor is associated with the core the holoenzyme is formed, which can initiate transcription.

It catalyses the reaction RNA(n) + a ribonucleoside 5'-triphosphate = RNA(n+1) + diphosphate. In terms of biological role, DNA-dependent RNA polymerase catalyzes the transcription of DNA into RNA using the four ribonucleoside triphosphates as substrates. The polypeptide is DNA-directed RNA polymerase subunit beta (Psychrobacter arcticus (strain DSM 17307 / VKM B-2377 / 273-4)).